The chain runs to 304 residues: 5-hmdU DNA kinase 2 (304 aa).

Positions 260–304 (VGGQDPLAHRVPEKPQKASKTKNKAVAKEEPKTSSVSLLGLMRKA) are disordered. Residues 266–275 (LAHRVPEKPQ) show a composition bias toward basic and acidic residues.

This sequence belongs to the thymidylate kinase family. 5-hmdU DNA kinase subfamily.

It carries out the reaction 5-hydroxymethyl-dUMP in DNA + ATP = 5-phosphomethyl-dUMP in DNA + ADP + H(+). Phosphorylates 5-hydroxymethyluracil (5hmdU) into 5-phosphomethyl-2'-deoxyuridine (5- PmdU) on DNA as a step in the pathway leading to thymidine hypermodifications in the viral genome. The phosphate is added internally to the DNA polymer. As a final result of the pathway of hypermodification, 5-aminoethoxy-2'-deoxymethyluridine (5-NeOmdU) substitutes for about 40% of the thymidines in the viral DNA. These modifications probably prevent degradation of viral genome by the host restriction-modification antiviral defense system. In Salmonella typhi, this protein is 5-hmdU DNA kinase 2.